Consider the following 316-residue polypeptide: MDVLLANPRGFCAGVDRAIEIVKRAIETLGAPIYVRHEVVHNRFVVDDLKQRGAIFVEELDEVPDNNTVIFSAHGVSQAVRQEAERRGLKVFDATCPLVTKVHFEVARHCRAGRDVVLIGHAGHPEVEGTMGQWNREAGTGQIYLVEDVEQVATLQIKQPENFAYTTQTTLSVDDTRGIIDALRERFPAMQGPKNDDICYATQNRQDAVRDLAKRCDLVLVVGSPNSSNSNRLSELARREGVESYLIDGAHEIDPAWVVGKQHIGVTAGASAPQVLVDGVLARLAELGANGVGELDGEPESMVFALPKELRLRLVD.

C12 contributes to the [4Fe-4S] cluster binding site. (2E)-4-hydroxy-3-methylbut-2-enyl diphosphate contacts are provided by H41 and H74. Residues H41 and H74 each contribute to the dimethylallyl diphosphate site. 2 residues coordinate isopentenyl diphosphate: H41 and H74. Residue C96 coordinates [4Fe-4S] cluster. H124 contributes to the (2E)-4-hydroxy-3-methylbut-2-enyl diphosphate binding site. Position 124 (H124) interacts with dimethylallyl diphosphate. H124 contacts isopentenyl diphosphate. The active-site Proton donor is E126. Position 169 (T169) interacts with (2E)-4-hydroxy-3-methylbut-2-enyl diphosphate. [4Fe-4S] cluster is bound at residue C199. S227, S228, N229, and S271 together coordinate (2E)-4-hydroxy-3-methylbut-2-enyl diphosphate. 4 residues coordinate dimethylallyl diphosphate: S227, S228, N229, and S271. 4 residues coordinate isopentenyl diphosphate: S227, S228, N229, and S271.

This sequence belongs to the IspH family. [4Fe-4S] cluster is required as a cofactor.

The enzyme catalyses isopentenyl diphosphate + 2 oxidized [2Fe-2S]-[ferredoxin] + H2O = (2E)-4-hydroxy-3-methylbut-2-enyl diphosphate + 2 reduced [2Fe-2S]-[ferredoxin] + 2 H(+). It carries out the reaction dimethylallyl diphosphate + 2 oxidized [2Fe-2S]-[ferredoxin] + H2O = (2E)-4-hydroxy-3-methylbut-2-enyl diphosphate + 2 reduced [2Fe-2S]-[ferredoxin] + 2 H(+). It functions in the pathway isoprenoid biosynthesis; dimethylallyl diphosphate biosynthesis; dimethylallyl diphosphate from (2E)-4-hydroxy-3-methylbutenyl diphosphate: step 1/1. Its pathway is isoprenoid biosynthesis; isopentenyl diphosphate biosynthesis via DXP pathway; isopentenyl diphosphate from 1-deoxy-D-xylulose 5-phosphate: step 6/6. Functionally, catalyzes the conversion of 1-hydroxy-2-methyl-2-(E)-butenyl 4-diphosphate (HMBPP) into a mixture of isopentenyl diphosphate (IPP) and dimethylallyl diphosphate (DMAPP). Acts in the terminal step of the DOXP/MEP pathway for isoprenoid precursor biosynthesis. This chain is 4-hydroxy-3-methylbut-2-enyl diphosphate reductase, found in Stenotrophomonas maltophilia (strain R551-3).